Reading from the N-terminus, the 686-residue chain is Cyclic nucleotide-gated channel alpha-1 (686 aa).

The Cytoplasmic segment spans residues 1–165 (MKNNIINTQQ…PSGNTYYNWL (165 aa)). Disordered regions lie at residues 31–75 (ENGA…PSQR) and 87–149 (NVNN…EEKK). The span at 39-53 (SEDDDSASTSEESEN) shows a compositional bias: acidic residues. Over residues 110 to 124 (SKSDDKNENKNDPEK) the composition is skewed to basic and acidic residues. A compositionally biased stretch (basic residues) spans 125–134 (KKKKKDKEKK). Residues 135–149 (KKEEKSKDKKEEEKK) are compositionally biased toward basic and acidic residues. The helical transmembrane segment at 166-187 (FCITLPVMYNWTMVIARACFDE) threads the bilayer. The Extracellular portion of the chain corresponds to 188 to 197 (LQSDYLEYWL). A helical membrane pass occupies residues 198-218 (ILDYVSDIVYLIDMFVRTRTG). Topologically, residues 219–243 (YLEQGLLVKEELKLINKYKSNLQFK) are cytoplasmic. The chain crosses the membrane as a helical span at residues 244-262 (LDVLSLIPTDLLYFKLGWN). The Extracellular segment spans residues 263 to 267 (YPEIR). The chain crosses the membrane as a helical span at residues 268–286 (LNRLLRFSRMFEFFQRTET). Over 287-293 (RTNYPNI) the chain is Cytoplasmic. Residues 291 to 399 (PNIFRISNLV…GNIGSMISNM (109 aa)) form an ion conduction pathway region. The chain crosses the membrane as a helical span at residues 294–317 (FRISNLVMYIVIIIHWNACVFYSI). At 318 to 340 (SKAIGFGNDTWVYPDINDPEFGR) the chain is on the extracellular side. Asparagine 325 carries an N-linked (GlcNAc...) asparagine glycan. The next 2 helical transmembrane spans lie at 341 to 375 (LARK…VFVV) and 376 to 400 (VDFL…SNMN). The interval 358–361 (TIGE) is selectivity filter. A C-linker region spans residues 401–477 (AARAEFQARI…DTLKKVRIFA (77 aa)). Residues 401 to 686 (AARAEFQARI…GAESGPIDST (286 aa)) lie on the Cytoplasmic side of the membrane. Residues 481 to 601 (AGLLVELVLK…EEKGKQILMK (121 aa)) form a cyclic nucleotide-binding domain region. 3',5'-cyclic GMP-binding residues include glycine 541, serine 544, arginine 557, and threonine 558. 3',5'-cyclic AMP contacts are provided by arginine 557 and threonine 558. A coiled-coil region spans residues 619–673 (LEEKVTRMEGSVDLLQTRFARILAEYESMQQKLKQRLTKVEKFLKPLIDTEFSSI).

This sequence belongs to the cyclic nucleotide-gated cation channel (TC 1.A.1.5) family. CNGA1 subfamily. In terms of assembly, forms heterotetrameric channels composed of CNGA1 and CNGB1 subunits with 3:1 stoichiometry. May also form cyclic nucleotide-activated homotetrameric channels, that are efficiently activated by saturating cGMP, but poorly activated by saturating cAMP compared to the heterotetramer with CNGB1. The channel binds Ca(2+)-bound CALM1 via CaM1 and CaM2 regions of the CNGB1 subunit; this interaction modulates the affinity of the channel for cNMPs in response to intracellular Ca(2+) levels. In terms of tissue distribution, rod cells in the retina.

The protein localises to the cell membrane. It carries out the reaction Ca(2+)(in) = Ca(2+)(out). It catalyses the reaction Na(+)(in) = Na(+)(out). The catalysed reaction is K(+)(in) = K(+)(out). The enzyme catalyses NH4(+)(in) = NH4(+)(out). It carries out the reaction Rb(+)(in) = Rb(+)(out). It catalyses the reaction Li(+)(in) = Li(+)(out). The catalysed reaction is Cs(+)(in) = Cs(+)(out). With respect to regulation, channel opening is activated by cGMP and at a much lesser extent by cAMP. Ca(2+) binding concominantly blocks monovalent cation currents. Inhibited by L-cis-diltiazem. Its function is as follows. Pore-forming subunit of the rod cyclic nucleotide-gated channel. Mediates rod photoresponses at dim light converting transient changes in intracellular cGMP levels into electrical signals. In the dark, cGMP levels are high and keep the channel open enabling a steady inward current carried by Na(+) and Ca(2+) ions that leads to membrane depolarization and neurotransmitter release from synaptic terminals. Upon photon absorption cGMP levels decline leading to channel closure and membrane hyperpolarization that ultimately slows neurotransmitter release and signals the presence of light, the end point of the phototransduction cascade. Conducts cGMP- and cAMP-gated ion currents, with permeability for monovalent and divalent cations. The selectivity for Ca(2+) over Na(+) increases with cGMP concentrations, whereas the selectivity among monovalent ions is independent of the cGMP levels. The sequence is that of Cyclic nucleotide-gated channel alpha-1 from Homo sapiens (Human).